The chain runs to 82 residues: Protein transport protein SBH1 (82 aa).

The tract at residues 1-36 (MSSPTPPGGQRTLQKRKQGSSQKVAASAPKKNTNSN) is disordered. Topologically, residues 1 to 53 (MSSPTPPGGQRTLQKRKQGSSQKVAASAPKKNTNSNNSILKIYSDEATGLRVD) are cytoplasmic. A compositionally biased stretch (polar residues) spans 19-36 (GSSQKVAASAPKKNTNSN). A helical transmembrane segment spans residues 54–74 (PLVVLFLAVGFIFSVVALHVI).

The protein belongs to the SEC61-beta family. In terms of assembly, component of the heterotrimeric Sec61 complex, which is composed of SSH1, SBH1 and SSS1. Presumably three to four Sec61 heterotrimers assemble into an oligomeric ring with a central aqueous pore. In cotranslational ER import, the pore diameter varies from 9-15 A in a ribosome-free resting state to 40-60 A in a functional state when associated with the ribosome. The Sec61 complex is part of a channel-forming translocon complex whose composition seem to change dependent upon different functional states. During post-translational ER import the Sec61 complex associates with the Sec62/63 complex to form the Sec complex. SBH1 interacts OST2, OST4 and WBP1 components of the OT complex.

The protein resides in the endoplasmic reticulum membrane. Its function is as follows. Part of the Sec61 complex, which is the major component of a channel-forming translocon complex that mediates protein translocation across the endoplasmic reticulum (ER). The functional states of the translocon complex include co- and post-translational ER import, cotranslational membrane protein integration and retrograde transport of misfolded proteins out of the ER. In the cotranslational pathway, ribosomes synthesizing presecretory proteins are targeted to the translocon by the cytosolic signal recognition particle (SRP) and its ER-localized receptor. The association of the Sec61 complex with the ribosome is mediated by the 28S rRNA of the large ribosomal subunit. SRP-independent post-translational translocation requires the association of additional factors, such as the Sec62/63 complex and KAR2. This chain is Protein transport protein SBH1 (SBH1), found in Saccharomyces cerevisiae (strain ATCC 204508 / S288c) (Baker's yeast).